A 342-amino-acid polypeptide reads, in one-letter code: tRNA N6-adenosine threonylcarbamoyltransferase (342 aa).

The Fe cation site is built by His-115 and His-119. Substrate-binding positions include 137-141 (IVSGG), Asp-170, Gly-183, Asp-187, and Asn-276. Asp-304 provides a ligand contact to Fe cation.

This sequence belongs to the KAE1 / TsaD family. It depends on Fe(2+) as a cofactor.

The protein localises to the cytoplasm. The catalysed reaction is L-threonylcarbamoyladenylate + adenosine(37) in tRNA = N(6)-L-threonylcarbamoyladenosine(37) in tRNA + AMP + H(+). Functionally, required for the formation of a threonylcarbamoyl group on adenosine at position 37 (t(6)A37) in tRNAs that read codons beginning with adenine. Is involved in the transfer of the threonylcarbamoyl moiety of threonylcarbamoyl-AMP (TC-AMP) to the N6 group of A37, together with TsaE and TsaB. TsaD likely plays a direct catalytic role in this reaction. In Staphylococcus saprophyticus subsp. saprophyticus (strain ATCC 15305 / DSM 20229 / NCIMB 8711 / NCTC 7292 / S-41), this protein is tRNA N6-adenosine threonylcarbamoyltransferase.